A 335-amino-acid chain; its full sequence is Anthranilate phosphoribosyltransferase (335 aa).

5-phospho-alpha-D-ribose 1-diphosphate-binding positions include Gly79, 82 to 83, Ser87, 89 to 92, 107 to 115, and Ser119; these read GD, NIST, and KHGNRSITS. Gly79 is a binding site for anthranilate. Ser91 is a binding site for Mg(2+). Asn110 serves as a coordination point for anthranilate. Arg165 lines the anthranilate pocket. 2 residues coordinate Mg(2+): Asp224 and Glu225.

This sequence belongs to the anthranilate phosphoribosyltransferase family. As to quaternary structure, homodimer. Mg(2+) is required as a cofactor.

It catalyses the reaction N-(5-phospho-beta-D-ribosyl)anthranilate + diphosphate = 5-phospho-alpha-D-ribose 1-diphosphate + anthranilate. It functions in the pathway amino-acid biosynthesis; L-tryptophan biosynthesis; L-tryptophan from chorismate: step 2/5. Its function is as follows. Catalyzes the transfer of the phosphoribosyl group of 5-phosphorylribose-1-pyrophosphate (PRPP) to anthranilate to yield N-(5'-phosphoribosyl)-anthranilate (PRA). The protein is Anthranilate phosphoribosyltransferase of Lactococcus lactis subsp. cremoris (strain MG1363).